Here is a 2153-residue protein sequence, read N- to C-terminus: Genome polyprotein (2153 aa).

Residue G2 is the site of N-myristoyl glycine; by host attachment. The tract at residues 213 to 240 (HTHPGQSGHQIRGPSQSNDRSGGKPDED) is disordered. The segment covering 216-232 (PGQSGHQIRGPSQSNDR) has biased composition (polar residues). Residues 565-584 (ELQNNDDPVENFVESTLKEV) are amphipathic alpha-helix. Active-site for protease 2A activity residues include H864 and D880. Zn(2+) is bound by residues C897 and C899. C951 (for protease 2A activity) is an active-site residue. Zn(2+)-binding residues include C957 and H959. The interval 1088-1158 (SDSWLRKFTE…GFSSASSEAQ (71 aa)) is membrane-binding. The oligomerization stretch occupies residues 1088–1224 (SDSWLRKFTE…NPGCGKSLVT (137 aa)). The RNA-binding stretch occupies residues 1109–1113 (SIKIG). Residues 1187-1346 (TKIQKDLKQL…FRNTTGLLDV (160 aa)) enclose the SF3 helicase domain. 1214–1221 (GNPGCGKS) serves as a coordination point for ATP. Zn(2+) is bound by residues C1353, C1365, and C1370. The C4-type; degenerate zinc finger occupies 1353 to 1370 (CTGCPKPAHYKTCCPLLC). An RNA-binding region spans residues 1397–1404 (ENATRKKV). Residues 1408–1413 (LDAIFQ) are oligomerization. An intramembrane segment occupies 1460–1480 (VHYMLNCLGSLIIILGTVYAL). At Y1491 the chain carries O-(5'-phospho-RNA)-tyrosine. The Peptidase C3 domain maps to 1511 to 1689 (GPEHEFVRAL…YGAALLRKYF (179 aa)). Residues H1550, E1581, and C1657 each act as for protease 3C activity in the active site. Residues 1920–2033 (GELLAFDYTN…SYPFELDPME (114 aa)) enclose the RdRp catalytic domain. Mg(2+)-binding residues include D1926 and D2019.

The protein belongs to the picornaviruses polyprotein family. In terms of assembly, interacts with capsid protein VP1 and capsid protein VP3 to form heterotrimeric protomers. As to quaternary structure, interacts with capsid protein VP0, and capsid protein VP3 to form heterotrimeric protomers. Five protomers subsequently associate to form pentamers which serve as building blocks for the capsid. Interacts with capsid protein VP2, capsid protein VP3 and capsid protein VP4 following cleavage of capsid protein VP0. Interacts (via C-terminus) with capsid protein VP4 (via C-terminus). Interacts with host CDHR3 (via N-terminus); this interaction occurs near each threefold vertex of the capsid and allows the virus attachment and entry into the host cell. Interacts with capsid protein VP1 and capsid protein VP3 in the mature capsid. Interacts with host CDHR3 (via N-terminus); this interaction occurs near each threefold vertex of the capsid and allows the virus attachment and entry into the host cell. In terms of assembly, interacts with capsid protein VP0 and capsid protein VP1 to form heterotrimeric protomers. Five protomers subsequently associate to form pentamers which serve as building blocks for the capsid. Interacts with capsid protein VP4 in the mature capsid. Interacts with protein 2C; this interaction may be important for virion morphogenesis. Interacts with host CDHR3 (via N-terminus); this interaction occurs near each threefold vertex of the capsid and allows the virus attachment and entry into the host cell. As to quaternary structure, interacts (via C-terminus) with capsid protein VP1 (via C-terminus). Interacts with capsid protein VP3. Homodimer. In terms of assembly, homohexamer; forms a hexameric ring structure with 6-fold symmetry characteristic of AAA+ ATPases. Interacts (via N-terminus) with host RTN3 (via reticulon domain); this interaction is important for viral replication. Interacts with capsid protein VP3; this interaction may be important for virion morphogenesis. As to quaternary structure, interacts with protein 3CD. Homodimer. Interacts with host GBF1. Interacts (via GOLD domain) with host ACBD3 (via GOLD domain); this interaction allows the formation of a viral protein 3A/ACBD3 heterotetramer with a 2:2 stoichiometry, which will stimulate the recruitment of host PI4KB in order to synthesize PI4P at the viral RNA replication sites. In terms of assembly, interacts with RNA-directed RNA polymerase. As to quaternary structure, interacts with protein 3AB and with RNA-directed RNA polymerase. Interacts with Viral protein genome-linked and with protein 3CD. It depends on Mg(2+) as a cofactor. Post-translationally, specific enzymatic cleavages in vivo by the viral proteases yield processing intermediates and the mature proteins. In terms of processing, myristoylation is required for the formation of pentamers during virus assembly. Further assembly of 12 pentamers and a molecule of genomic RNA generates the provirion. During virion maturation, immature virions are rendered infectious following cleavage of VP0 into VP4 and VP2. This maturation seems to be an autocatalytic event triggered by the presence of RNA in the capsid and it is followed by a conformational change infectious virion. Post-translationally, myristoylation is required during RNA encapsidation and formation of the mature virus particle. In terms of processing, VPg is uridylylated by the polymerase into VPg-pUpU. This acts as a nucleotide-peptide primer for the genomic RNA replication.

It is found in the virion. The protein resides in the host cytoplasm. Its subcellular location is the host cytoplasmic vesicle membrane. The protein localises to the host nucleus. The catalysed reaction is a ribonucleoside 5'-triphosphate + H2O = a ribonucleoside 5'-diphosphate + phosphate + H(+). It carries out the reaction Selective cleavage of Gln-|-Gly bond in the poliovirus polyprotein. In other picornavirus reactions Glu may be substituted for Gln, and Ser or Thr for Gly.. The enzyme catalyses Selective cleavage of Tyr-|-Gly bond in the picornavirus polyprotein.. It catalyses the reaction RNA(n) + a ribonucleoside 5'-triphosphate = RNA(n+1) + diphosphate. Its activity is regulated as follows. Replication or transcription is subject to high level of random mutations by the nucleotide analog ribavirin. Its function is as follows. Forms an icosahedral capsid of pseudo T=3 symmetry with capsid proteins VP2 and VP3. The capsid is 300 Angstroms in diameter, composed of 60 copies of each capsid protein and enclosing the viral positive strand RNA genome. Capsid protein VP1 mainly forms the vertices of the capsid. The VP1 C-termini form 60 dominant spike-like protrusions on the surface of the virion. Capsid protein VP1 interacts with host cell receptor CDHR3 to provide virion attachment to target host cells. This attachment induces virion internalization. Tyrosine kinases are probably involved in the entry process. After binding to its receptor, the capsid undergoes conformational changes. Capsid protein VP1 N-terminus (that contains an amphipathic alpha-helix) and capsid protein VP4 are externalized. Together, they shape a pore in the host membrane through which viral genome is translocated to host cell cytoplasm. Forms an icosahedral capsid of pseudo T=3 symmetry with capsid proteins VP2 and VP3. The capsid is 300 Angstroms in diameter, composed of 60 copies of each capsid protein and enclosing the viral positive strand RNA genome. In terms of biological role, lies on the inner surface of the capsid shell. After binding to the host receptor, the capsid undergoes conformational changes. Capsid protein VP4 is released, Capsid protein VP1 N-terminus is externalized, and together, they shape a pore in the host membrane through which the viral genome is translocated into the host cell cytoplasm. Functionally, component of immature procapsids, which is cleaved into capsid proteins VP4 and VP2 after maturation. Allows the capsid to remain inactive before the maturation step. Its function is as follows. Cysteine protease that cleaves viral polyprotein and specific host proteins. It is responsible for the autocatalytic cleavage between the P1 and P2 regions, which is the first cleavage occurring in the polyprotein. Also cleaves the host translation initiation factor EIF4G1, in order to shut down the capped cellular mRNA translation. Inhibits the host nucleus-cytoplasm protein and RNA trafficking by cleaving host members of the nuclear pores. Counteracts stress granule formation probably by antagonizing its assembly or promoting its dissassembly. Plays an essential role in the virus replication cycle by acting as a viroporin. Creates a pore in the host endoplasmic reticulum and as a consequence releases Ca2+ in the cytoplasm of infected cell. In turn, high levels of cytoplasmic calcium may trigger membrane trafficking and transport of viral ER-associated proteins to viroplasms, sites of viral genome replication. In terms of biological role, induces and associates with structural rearrangements of intracellular membranes. Displays RNA-binding, nucleotide binding and NTPase activities. May play a role in virion morphogenesis and viral RNA encapsidation by interacting with the capsid protein VP3. Functionally, localizes the viral replication complex to the surface of membranous vesicles. Together with protein 3CD binds the Cis-Active RNA Element (CRE) which is involved in RNA synthesis initiation. Acts as a cofactor to stimulate the activity of 3D polymerase, maybe through a nucleid acid chaperone activity. Its function is as follows. Localizes the viral replication complex to the surface of membranous vesicles. It inhibits host cell endoplasmic reticulum-to-Golgi apparatus transport and causes the disassembly of the Golgi complex, possibly through GBF1 interaction. This would result in depletion of MHC, trail receptors and IFN receptors at the host cell surface. Plays an essential role in viral RNA replication by recruiting ACBD3 and PI4KB at the viral replication sites, thereby allowing the formation of the rearranged membranous structures where viral replication takes place. Acts as a primer for viral RNA replication and remains covalently bound to viral genomic RNA. VPg is uridylylated prior to priming replication into VPg-pUpU. The oriI viral genomic sequence may act as a template for this. The VPg-pUpU is then used as primer on the genomic RNA poly(A) by the RNA-dependent RNA polymerase to replicate the viral genome. During genome replication, the VPg-RNA linkage is removed by the host TDP2, thereby accelerating replication. During the late stage of the replication cycle, host TDP2 is excluded from sites of viral RNA synthesis and encapsidation, allowing for the generation of progeny virions. In terms of biological role, involved in the viral replication complex and viral polypeptide maturation. It exhibits protease activity with a specificity and catalytic efficiency that is different from protease 3C. Protein 3CD lacks polymerase activity. Protein 3CD binds to the 5'UTR of the viral genome. Functionally, major viral protease that mediates proteolytic processing of the polyprotein. Cleaves host EIF5B, contributing to host translation shutoff. Also cleaves host PABPC1, contributing to host translation shutoff. Its function is as follows. Replicates the viral genomic RNA on the surface of intracellular membranes. May form linear arrays of subunits that propagate along a strong head-to-tail interaction called interface-I. Covalently attaches UMP to a tyrosine of VPg, which is used to prime RNA synthesis. The positive stranded RNA genome is first replicated at virus induced membranous vesicles, creating a dsRNA genomic replication form. This dsRNA is then used as template to synthesize positive stranded RNA genomes. ss(+)RNA genomes are either translated, replicated or encapsidated. The chain is Genome polyprotein from Homo sapiens (Human).